Here is a 294-residue protein sequence, read N- to C-terminus: ATP phosphoribosyltransferase (294 aa).

This sequence belongs to the ATP phosphoribosyltransferase family. Long subfamily. Requires Mg(2+) as cofactor.

Its subcellular location is the cytoplasm. The enzyme catalyses 1-(5-phospho-beta-D-ribosyl)-ATP + diphosphate = 5-phospho-alpha-D-ribose 1-diphosphate + ATP. It participates in amino-acid biosynthesis; L-histidine biosynthesis; L-histidine from 5-phospho-alpha-D-ribose 1-diphosphate: step 1/9. With respect to regulation, feedback inhibited by histidine. In terms of biological role, catalyzes the condensation of ATP and 5-phosphoribose 1-diphosphate to form N'-(5'-phosphoribosyl)-ATP (PR-ATP). Has a crucial role in the pathway because the rate of histidine biosynthesis seems to be controlled primarily by regulation of HisG enzymatic activity. The protein is ATP phosphoribosyltransferase of Chlorobium chlorochromatii (strain CaD3).